A 348-amino-acid chain; its full sequence is 3'-dehydrocarminate deglycosidase alpha subunit (348 aa).

E145 provides a ligand contact to Mg(2+). H147 acts as the Proton acceptor in catalysis. Residues D177, H275, and E311 each contribute to the Mg(2+) site.

It belongs to the C-glycoside deglycosidase alpha subunit family. In terms of assembly, heterodimer composed of an alpha subunit (CarB) and a beta subunit (CarC). The cofactor is Mg(2+).

It catalyses the reaction 3'-dehydrocarminate + H(+) = kermesate + 1,5-anhydro-D-erythro-hex-1-en-3-ulose. With respect to regulation, activity is strongly reduced in the presence of chelating agents. Functionally, carbon-carbon bond-cleaving enzyme which participates in a carminate degradation pathway. Cleaves the C-C bond in 3'-dehydrocarminate to form kermesate. Also shows weak activity with other C-glycosides, such as 3''-dehydropuerarin (3''-oxo-puerarin), 3''-dehydroisoorientin (3''-oxo-homoorientin) and 3'-dehydromangiferin (3'-oxo-mangiferin). The sequence is that of 3'-dehydrocarminate deglycosidase alpha subunit from Microbacterium sp.